A 200-amino-acid chain; its full sequence is Pyridoxal 5'-phosphate synthase subunit PdxT (200 aa).

L-glutamine is bound at residue Gly-52 to Ser-54. Cys-84 serves as the catalytic Nucleophile. L-glutamine contacts are provided by residues Arg-116 and Ile-145–Arg-146. Catalysis depends on charge relay system residues His-181 and Glu-183.

Belongs to the glutaminase PdxT/SNO family. As to quaternary structure, in the presence of PdxS, forms a dodecamer of heterodimers. Only shows activity in the heterodimer.

The enzyme catalyses aldehydo-D-ribose 5-phosphate + D-glyceraldehyde 3-phosphate + L-glutamine = pyridoxal 5'-phosphate + L-glutamate + phosphate + 3 H2O + H(+). The catalysed reaction is L-glutamine + H2O = L-glutamate + NH4(+). It participates in cofactor biosynthesis; pyridoxal 5'-phosphate biosynthesis. Functionally, catalyzes the hydrolysis of glutamine to glutamate and ammonia as part of the biosynthesis of pyridoxal 5'-phosphate. The resulting ammonia molecule is channeled to the active site of PdxS. The polypeptide is Pyridoxal 5'-phosphate synthase subunit PdxT (Saccharolobus islandicus (strain L.S.2.15 / Lassen #1) (Sulfolobus islandicus)).